The chain runs to 202 residues: Small ribosomal subunit protein uS4 (202 aa).

Residues 18-42 (LPGLTRKAAKRSYPPGQHGQARRKR) are disordered. Residues 90–152 (NRLDNVCFRL…KPSKKLAETN (63 aa)) form the S4 RNA-binding domain.

The protein belongs to the universal ribosomal protein uS4 family. In terms of assembly, part of the 30S ribosomal subunit. Contacts protein S5. The interaction surface between S4 and S5 is involved in control of translational fidelity.

Its function is as follows. One of the primary rRNA binding proteins, it binds directly to 16S rRNA where it nucleates assembly of the body of the 30S subunit. In terms of biological role, with S5 and S12 plays an important role in translational accuracy. The sequence is that of Small ribosomal subunit protein uS4 from Synechococcus sp. (strain RCC307).